Here is a 260-residue protein sequence, read N- to C-terminus: Global transcriptional regulator CodY (260 aa).

The tract at residues 1-159 (MPNLLEKTRK…SSTVVGIQLL (159 aa)) is GAF domain. Residues 207–226 (ASVIADRIGITRSVIVNALR) constitute a DNA-binding region (H-T-H motif).

It belongs to the CodY family.

The protein localises to the cytoplasm. In terms of biological role, DNA-binding global transcriptional regulator which is involved in the adaptive response to starvation and acts by directly or indirectly controlling the expression of numerous genes in response to nutrient availability. During rapid exponential growth, CodY is highly active and represses genes whose products allow adaptation to nutrient depletion. The sequence is that of Global transcriptional regulator CodY from Streptococcus pyogenes serotype M4 (strain MGAS10750).